Here is a 231-residue protein sequence, read N- to C-terminus: Flagellar L-ring protein (231 aa).

Residues 1–18 (MNRLMIVSLLGIATALGG) form the signal peptide. C19 is lipidated: N-palmitoyl cysteine. The S-diacylglycerol cysteine moiety is linked to residue C19. The disordered stretch occupies residues 118–141 (LSLSAEYGGSRDAKGDSQAGQSNS).

Belongs to the FlgH family. As to quaternary structure, the basal body constitutes a major portion of the flagellar organelle and consists of four rings (L,P,S, and M) mounted on a central rod.

It is found in the cell outer membrane. The protein resides in the bacterial flagellum basal body. In terms of biological role, assembles around the rod to form the L-ring and probably protects the motor/basal body from shearing forces during rotation. The protein is Flagellar L-ring protein of Pseudomonas aeruginosa (strain LESB58).